The sequence spans 49 residues: Large ribosomal subunit protein bL33 (49 aa).

Belongs to the bacterial ribosomal protein bL33 family.

The protein is Large ribosomal subunit protein bL33 of Alkaliphilus oremlandii (strain OhILAs) (Clostridium oremlandii (strain OhILAs)).